Here is a 142-residue protein sequence, read N- to C-terminus: MNKENVITLDNPVKRGEQVIEQVTLMKPSAGTLRGVSLAAVANSEVDALIKVLPRMTAPMLTEQEVAALELPDLVALAGKVVGFLVAELGAVTFPKNLSVDDLMADVAVIFHWPPSELYPMSLTELITWREKALRRSGNTNE.

This sequence belongs to the mulikevirus tail assembly protein family.

Its function is as follows. Promotes tail assembly by creating a scaffold for the tail tube proteins. Tail assembly proteins E and E' would wrap the linear tape measure protein to create a tail assembly scaffold. The sequence is that of Tail assembly protein E' from Enterobacteriaceae (Bacteriophage P2).